Consider the following 577-residue polypeptide: Acyl-coenzyme A synthetase ACSM2B, mitochondrial (577 aa).

The N-terminal 46 residues, 1–46 (MHWLRKVQGLCTLWGTQMSSRTLYINSRQLVSLQWGHQEVPAKFNF), are a transit peptide targeting the mitochondrion. Q139 contributes to the CoA binding site. ATP is bound by residues 221–229 (TSGTSGLPK), 359–364 (EFYGQT), D446, and R461. T364 is a binding site for substrate. CoA is bound at residue 469–471 (SGY). R472 contributes to the substrate binding site. R501 lines the CoA pocket. S513 is subject to Phosphoserine. CoA contacts are provided by residues K532 and 540-542 (YPR). Residue K557 participates in ATP binding.

Belongs to the ATP-dependent AMP-binding enzyme family. Monomer. The cofactor is Mg(2+). Requires Mn(2+) as cofactor. As to expression, detected in liver.

The protein localises to the mitochondrion. The catalysed reaction is a medium-chain fatty acid + ATP + CoA = a medium-chain fatty acyl-CoA + AMP + diphosphate. It catalyses the reaction benzoate + ATP + CoA = benzoyl-CoA + AMP + diphosphate. It carries out the reaction hexanoate + ATP + CoA = hexanoyl-CoA + AMP + diphosphate. The enzyme catalyses butanoate + ATP + CoA = butanoyl-CoA + AMP + diphosphate. The catalysed reaction is octanoate + ATP + CoA = octanoyl-CoA + AMP + diphosphate. It catalyses the reaction decanoate + ATP + CoA = decanoyl-CoA + AMP + diphosphate. Activated by monovalent cations, such as potassium, rubidium or ammonium. Its function is as follows. Catalyzes the activation of fatty acids by CoA to produce an acyl-CoA, the first step in fatty acid metabolism. Capable of activating medium-chain fatty acids (e.g. butyric (C4) to decanoic (C10) acids), and certain carboxylate-containing xenobiotics, e.g. benzoate. The polypeptide is Acyl-coenzyme A synthetase ACSM2B, mitochondrial (ACSM2B) (Homo sapiens (Human)).